Here is a 111-residue protein sequence, read N- to C-terminus: uncharacterized protein (111 aa).

A helical membrane pass occupies residues 64–86; that stretch reads VLCWLVLPLYCCNLLNLFFNIFL.

It is found in the membrane. This is an uncharacterized protein from Saccharomyces cerevisiae (strain ATCC 204508 / S288c) (Baker's yeast).